A 159-amino-acid chain; its full sequence is Ribosomal RNA large subunit methyltransferase H (159 aa).

Residues leucine 76, glycine 108, and 127–132 contribute to the S-adenosyl-L-methionine site; that span reads FSHMTF.

The protein belongs to the RNA methyltransferase RlmH family. Homodimer.

It localises to the cytoplasm. It catalyses the reaction pseudouridine(1915) in 23S rRNA + S-adenosyl-L-methionine = N(3)-methylpseudouridine(1915) in 23S rRNA + S-adenosyl-L-homocysteine + H(+). In terms of biological role, specifically methylates the pseudouridine at position 1915 (m3Psi1915) in 23S rRNA. This Halothermothrix orenii (strain H 168 / OCM 544 / DSM 9562) protein is Ribosomal RNA large subunit methyltransferase H.